The sequence spans 142 residues: Large ribosomal subunit protein uL11 (142 aa).

It belongs to the universal ribosomal protein uL11 family. In terms of assembly, part of the ribosomal stalk of the 50S ribosomal subunit. Interacts with L10 and the large rRNA to form the base of the stalk. L10 forms an elongated spine to which L12 dimers bind in a sequential fashion forming a multimeric L10(L12)X complex. In terms of processing, one or more lysine residues are methylated.

Forms part of the ribosomal stalk which helps the ribosome interact with GTP-bound translation factors. The chain is Large ribosomal subunit protein uL11 from Mycolicibacterium gilvum (strain PYR-GCK) (Mycobacterium gilvum (strain PYR-GCK)).